The sequence spans 564 residues: Probable beta-glucosidase btgE (564 aa).

A signal peptide spans 1-18 (MRGAFLATAAAIAGTAMA). Residues 285–304 (ATSSVAPSSSPSKPAAPSGA) form a disordered region. Residue asparagine 404 is glycosylated (N-linked (GlcNAc...) asparagine). The Proton donor role is filled by glutamate 405. Catalysis depends on glutamate 501, which acts as the Nucleophile.

Belongs to the glycosyl hydrolase 17 family.

Its subcellular location is the secreted. It is found in the cell wall. It catalyses the reaction Hydrolysis of terminal, non-reducing beta-D-glucosyl residues with release of beta-D-glucose.. Its pathway is glycan metabolism; cellulose degradation. Its function is as follows. Beta-glucosidases are one of a number of cellulolytic enzymes involved in the degradation of cellulosic biomass. Catalyzes the last step releasing glucose from the inhibitory cellobiose. The sequence is that of Probable beta-glucosidase btgE (btgE) from Aspergillus clavatus (strain ATCC 1007 / CBS 513.65 / DSM 816 / NCTC 3887 / NRRL 1 / QM 1276 / 107).